The sequence spans 61 residues: Large ribosomal subunit protein uL30 (61 aa).

The protein belongs to the universal ribosomal protein uL30 family. Part of the 50S ribosomal subunit.

The sequence is that of Large ribosomal subunit protein uL30 from Chlorobium limicola (strain DSM 245 / NBRC 103803 / 6330).